The following is a 153-amino-acid chain: MKQKAKDENVLAQNRQARHDYFIKDTYEAGIALTGTEIKSVRARHVTLRDGYVQIINGSAFLENVHIDEYKEGNRYNHDPLRSRRLLLHKKEIAKLADVKAQKGMTIVPLKVYLKHGFAKVLIGVAQGKKEYDKRETIKKRDQDRELRRKYRI.

Belongs to the SmpB family.

It is found in the cytoplasm. In terms of biological role, required for rescue of stalled ribosomes mediated by trans-translation. Binds to transfer-messenger RNA (tmRNA), required for stable association of tmRNA with ribosomes. tmRNA and SmpB together mimic tRNA shape, replacing the anticodon stem-loop with SmpB. tmRNA is encoded by the ssrA gene; the 2 termini fold to resemble tRNA(Ala) and it encodes a 'tag peptide', a short internal open reading frame. During trans-translation Ala-aminoacylated tmRNA acts like a tRNA, entering the A-site of stalled ribosomes, displacing the stalled mRNA. The ribosome then switches to translate the ORF on the tmRNA; the nascent peptide is terminated with the 'tag peptide' encoded by the tmRNA and targeted for degradation. The ribosome is freed to recommence translation, which seems to be the essential function of trans-translation. This is SsrA-binding protein from Lactobacillus delbrueckii subsp. bulgaricus (strain ATCC 11842 / DSM 20081 / BCRC 10696 / JCM 1002 / NBRC 13953 / NCIMB 11778 / NCTC 12712 / WDCM 00102 / Lb 14).